An 877-amino-acid chain; its full sequence is Alanine--tRNA ligase (877 aa).

Zn(2+) is bound by residues His-565, His-569, Cys-667, and His-671.

It belongs to the class-II aminoacyl-tRNA synthetase family. Requires Zn(2+) as cofactor.

It localises to the cytoplasm. The catalysed reaction is tRNA(Ala) + L-alanine + ATP = L-alanyl-tRNA(Ala) + AMP + diphosphate. Catalyzes the attachment of alanine to tRNA(Ala) in a two-step reaction: alanine is first activated by ATP to form Ala-AMP and then transferred to the acceptor end of tRNA(Ala). Also edits incorrectly charged Ser-tRNA(Ala) and Gly-tRNA(Ala) via its editing domain. In Acidithiobacillus ferridurans, this protein is Alanine--tRNA ligase.